A 195-amino-acid chain; its full sequence is Cytochrome c biogenesis ATP-binding export protein CcmA (195 aa).

The ABC transporter domain maps to 1–195; the sequence is MLSLHQLQFN…IKSAQILQLV (195 aa). Residue 33-40 participates in ATP binding; sequence GANGSGKS.

This sequence belongs to the ABC transporter superfamily. CcmA exporter (TC 3.A.1.107) family. In terms of assembly, the complex is composed of two ATP-binding proteins (CcmA) and two transmembrane proteins (CcmB).

The protein resides in the cell inner membrane. The catalysed reaction is heme b(in) + ATP + H2O = heme b(out) + ADP + phosphate + H(+). Part of the ABC transporter complex CcmAB involved in the biogenesis of c-type cytochromes; once thought to export heme, this seems not to be the case, but its exact role is uncertain. Responsible for energy coupling to the transport system. The chain is Cytochrome c biogenesis ATP-binding export protein CcmA from Rickettsia felis (strain ATCC VR-1525 / URRWXCal2) (Rickettsia azadi).